The following is a 207-amino-acid chain: Uracil phosphoribosyltransferase (207 aa).

5-phospho-alpha-D-ribose 1-diphosphate-binding positions include Arg77, Arg102, and 129–137; that span reads DPMLATGGS. Uracil contacts are provided by residues Ile192 and 197–199; that span reads GDA. Asp198 serves as a coordination point for 5-phospho-alpha-D-ribose 1-diphosphate.

This sequence belongs to the UPRTase family. Requires Mg(2+) as cofactor.

It catalyses the reaction UMP + diphosphate = 5-phospho-alpha-D-ribose 1-diphosphate + uracil. The protein operates within pyrimidine metabolism; UMP biosynthesis via salvage pathway; UMP from uracil: step 1/1. Its activity is regulated as follows. Allosterically activated by GTP. Functionally, catalyzes the conversion of uracil and 5-phospho-alpha-D-ribose 1-diphosphate (PRPP) to UMP and diphosphate. This chain is Uracil phosphoribosyltransferase, found in Nocardia farcinica (strain IFM 10152).